A 551-amino-acid polypeptide reads, in one-letter code: MNNTIINSLIGGDDSIKRSNVFAVDSQIPTLYMPQYISLSGVMTNDGPDNQAIASFEIRDQYITALNHLVLSLELPEVKGMGRFGYVPYVGYKCINHVSISSCNGVIWEIEGEELYNNCINNTIALKHSGYSSELNDISIGLTPNDTIKEPSTVYVYIKTPFDVEDTFSSLKLSDSKITVTVTFNPVSDIVIRDSSFDFETFNKEFVYVPELSFIGYMVKNVQIKPSFIEKPRRVIGQINQPTATVTEVHAATSLSVYTKPYYGNTDNKFISYPGYSQDEKDYIDAYVSRLLDDLVIVSDGPPTGYPESAEIVEVPEDGIVSIQDADVYVKIDNVPDNMSVYLHTNLLMFGTRKNSFIYNISKKFSAITGTYSDATKRTIFAHISHSINIIDTSIPVSLWTSQRNVYNGDNRSAESKAKDLFINDPFIKGIDFKNKTDIISRLEVRFGNDVLYSENGPISRIYNELLTKSNNGTRTLTFNFTPKIFFRPTTITANVSRGKDKLSVRVVYSTMDVNHPIYYVQKQLVVVCNDLYKVSYDQGVSITKIMGDNN.

Belongs to the orthopoxvirus protein OPG125 family. In terms of assembly, homotrimer. Self-assembles to form a layer. Interacts with OPG158 (via N-terminus); this interaction is necessary for OPG125 association with membranes.

It is found in the membrane. Its function is as follows. Scaffold protein which forms a transitory spherical honeycomb lattice providing curvature and rigidity to the convex membrane of crescent and immature virions (IV). This association occurs concomitantly with viral membrane formation. Targeted by the drug rifampicin, which prevents the formation of this lattice, and hence virus morphogenesis. In the presence of rifampicin, irregularly shaped membranes that lack the honeycomb layer accumulate around areas of electron-dense viroplasm. This layer is lost from virions during maturation from IV to mature virion (MV), through the proteolysis of OPG158 N-terminus. The sequence is that of Scaffold protein OPG125 (OPG125) from Vaccinia virus (strain Ankara) (VACV).